A 499-amino-acid polypeptide reads, in one-letter code: uncharacterized protein (499 aa).

2 disordered regions span residues 76–118 (QATA…RLSP) and 208–268 (DFET…DWAN). Positions 87 to 104 (DPEKQTGKSRYHPSEEIR) are enriched in basic and acidic residues. The segment covering 208 to 263 (DFETEDDESGDDDSEDTGEDEDEEEWVAILEDEDEDDDDDDDDDEDDDDSDSDESL) has biased composition (acidic residues). The residue at position 355 (S355) is a Phosphoserine. Residues 478 to 499 (AEGQIRKLLFPKTNQSTQPKPK) are disordered. Residues 489–499 (KTNQSTQPKPK) show a composition bias toward polar residues.

This is an uncharacterized protein from Arabidopsis thaliana (Mouse-ear cress).